Here is a 295-residue protein sequence, read N- to C-terminus: MVSSWWEIQVVGDAALEEGISWRLQSFGCQGTASQKQNHDCHMTGYLPQKQVNHLDLAALSLWLAQDAIALGFLPPTTRWKLINEEDWATSWQQYWHPQEVGDRLLIYPAWLDLPEHCERLLLRLDPGVAFGTGTHPTTQLCLEALEMHLDQTFGPVEQVTVADIGCGTGILSIAALRLGAKQAFAVDLDPLAVESADRSRDLNEIPPEQMIVQQGSVEQVPHPVQGIVCNILAETIIDLIPTLATISQPHTWAAFSGILVTQAKSVVDALEQQGWQVGSLWQRQDWCCINAHRL.

Positions 139, 166, 188, and 231 each coordinate S-adenosyl-L-methionine.

Belongs to the methyltransferase superfamily. PrmA family.

It localises to the cytoplasm. The enzyme catalyses L-lysyl-[protein] + 3 S-adenosyl-L-methionine = N(6),N(6),N(6)-trimethyl-L-lysyl-[protein] + 3 S-adenosyl-L-homocysteine + 3 H(+). Its function is as follows. Methylates ribosomal protein L11. The protein is Ribosomal protein L11 methyltransferase of Cyanothece sp. (strain PCC 7425 / ATCC 29141).